Consider the following 336-residue polypeptide: tRNA N6-adenosine threonylcarbamoyltransferase (336 aa).

Fe cation contacts are provided by His111 and His115. Residues 134-138, Asp167, Gly180, and Asn270 each bind substrate; that span reads LVSGG. Residue Asp298 coordinates Fe cation.

This sequence belongs to the KAE1 / TsaD family. The cofactor is Fe(2+).

It localises to the cytoplasm. It catalyses the reaction L-threonylcarbamoyladenylate + adenosine(37) in tRNA = N(6)-L-threonylcarbamoyladenosine(37) in tRNA + AMP + H(+). Required for the formation of a threonylcarbamoyl group on adenosine at position 37 (t(6)A37) in tRNAs that read codons beginning with adenine. Is involved in the transfer of the threonylcarbamoyl moiety of threonylcarbamoyl-AMP (TC-AMP) to the N6 group of A37, together with TsaE and TsaB. TsaD likely plays a direct catalytic role in this reaction. The chain is tRNA N6-adenosine threonylcarbamoyltransferase from Acinetobacter baumannii (strain SDF).